A 361-amino-acid polypeptide reads, in one-letter code: Diacylglycerol O-acyltransferase 2 (361 aa).

Residues 1 to 42 (MKTIIAAYSGVLRGTGSSLLSAVHDLPNIPWLSKSSVVRHLQ) lie on the Cytoplasmic side of the membrane. A helical transmembrane segment spans residues 43–61 (IISVLQWVLSFLILGVACT). The Lumenal segment spans residues 62–65 (AVLV). Residues 66–85 (YIFCTDLWLIAALYLTWMVL) traverse the membrane as a helical segment. Topologically, residues 86–361 (DWNTPYKGGR…LHDSEMLEIV (276 aa)) are cytoplasmic.

This sequence belongs to the diacylglycerol acyltransferase family.

It localises to the endoplasmic reticulum membrane. Its subcellular location is the lipid droplet. The protein resides in the cytoplasm. The protein localises to the perinuclear region. The enzyme catalyses an acyl-CoA + a 1,2-diacyl-sn-glycerol = a triacyl-sn-glycerol + CoA. It carries out the reaction all-trans-retinol + an acyl-CoA = an all-trans-retinyl ester + CoA. It catalyses the reaction 2-(9Z-octadecenoyl)-glycerol + (9Z)-octadecenoyl-CoA = 1,2-di-(9Z-octadecenoyl)-sn-glycerol + CoA. The catalysed reaction is 1,2-di-(9Z-octadecenoyl)-sn-glycerol + (9Z)-octadecenoyl-CoA = 1,2,3-tri-(9Z-octadecenoyl)-glycerol + CoA. The enzyme catalyses all-trans-retinol + hexadecanoyl-CoA = all-trans-retinyl hexadecanoate + CoA. It carries out the reaction 1-O-(9Z-octadecenyl)-glycerol + (9Z)-octadecenoyl-CoA = 1-O-(9Z-octadecyl)-3-(9Z-octadecenoyl)-glycerol + CoA. It catalyses the reaction 1-(9Z-octadecenoyl)-glycerol + (9Z)-octadecenoyl-CoA = 1,2-di-(9Z-octadecenoyl)-glycerol + CoA. The catalysed reaction is 1,2-di-(9Z-octadecenoyl)-sn-glycerol + hexadecanoyl-CoA = 1,2-di-(9Z)-octadecenoyl-3-hexadecanoyl-sn-glycerol + CoA. The enzyme catalyses 1,3-di-(9Z-octadecenoyl)-glycerol + (9Z)-octadecenoyl-CoA = 1,2,3-tri-(9Z-octadecenoyl)-glycerol + CoA. It carries out the reaction 2,3-di-(9Z)-octadecenoyl-sn-glycerol + (9Z)-octadecenoyl-CoA = 1,2,3-tri-(9Z-octadecenoyl)-glycerol + CoA. It catalyses the reaction 2-(9Z-octadecenoyl)-glycerol + hexadecanoyl-CoA = 1-hexadecanoyl-2-(9Z-octadecenoyl)-sn-glycerol + CoA. It functions in the pathway glycerolipid metabolism; triacylglycerol biosynthesis. Essential acyltransferase that catalyzes the terminal and only committed step in triacylglycerol synthesis by using diacylglycerol and fatty acyl CoA as substrates. Required for synthesis and storage of intracellular triglycerides. Probably plays a central role in cytosolic lipid accumulation. This Xenopus tropicalis (Western clawed frog) protein is Diacylglycerol O-acyltransferase 2 (dgat2).